Consider the following 611-residue polypeptide: Dihydroxy-acid dehydratase (611 aa).

Aspartate 81 provides a ligand contact to Mg(2+). Residue cysteine 122 coordinates [2Fe-2S] cluster. Residues aspartate 123 and lysine 124 each contribute to the Mg(2+) site. Lysine 124 bears the N6-carboxylysine mark. Cysteine 195 is a binding site for [2Fe-2S] cluster. Residue glutamate 491 participates in Mg(2+) binding. The active-site Proton acceptor is the serine 517.

Belongs to the IlvD/Edd family. In terms of assembly, homodimer. Requires [2Fe-2S] cluster as cofactor. Mg(2+) serves as cofactor.

It carries out the reaction (2R)-2,3-dihydroxy-3-methylbutanoate = 3-methyl-2-oxobutanoate + H2O. The catalysed reaction is (2R,3R)-2,3-dihydroxy-3-methylpentanoate = (S)-3-methyl-2-oxopentanoate + H2O. Its pathway is amino-acid biosynthesis; L-isoleucine biosynthesis; L-isoleucine from 2-oxobutanoate: step 3/4. It functions in the pathway amino-acid biosynthesis; L-valine biosynthesis; L-valine from pyruvate: step 3/4. Functions in the biosynthesis of branched-chain amino acids. Catalyzes the dehydration of (2R,3R)-2,3-dihydroxy-3-methylpentanoate (2,3-dihydroxy-3-methylvalerate) into 2-oxo-3-methylpentanoate (2-oxo-3-methylvalerate) and of (2R)-2,3-dihydroxy-3-methylbutanoate (2,3-dihydroxyisovalerate) into 2-oxo-3-methylbutanoate (2-oxoisovalerate), the penultimate precursor to L-isoleucine and L-valine, respectively. In Actinobacillus pleuropneumoniae serotype 5b (strain L20), this protein is Dihydroxy-acid dehydratase.